Here is a 110-residue protein sequence, read N- to C-terminus: Hydrogenase maturation factor HypA (110 aa).

His-2 contributes to the Ni(2+) binding site. Positions 70, 73, 86, and 89 each coordinate Zn(2+).

This sequence belongs to the HypA/HybF family.

Involved in the maturation of [NiFe] hydrogenases. Required for nickel insertion into the metal center of the hydrogenase. This Geotalea daltonii (strain DSM 22248 / JCM 15807 / FRC-32) (Geobacter daltonii) protein is Hydrogenase maturation factor HypA.